The primary structure comprises 687 residues: Polyphosphate kinase (687 aa).

An ATP-binding site is contributed by Asn-45. Arg-375 and Arg-405 together coordinate Mg(2+). His-435 acts as the Phosphohistidine intermediate in catalysis. Positions 472, 568, and 596 each coordinate ATP.

The protein belongs to the polyphosphate kinase 1 (PPK1) family. It depends on Mg(2+) as a cofactor. Post-translationally, an intermediate of this reaction is the autophosphorylated ppk in which a phosphate is covalently linked to a histidine residue through a N-P bond.

It carries out the reaction [phosphate](n) + ATP = [phosphate](n+1) + ADP. Functionally, catalyzes the reversible transfer of the terminal phosphate of ATP to form a long-chain polyphosphate (polyP). This is Polyphosphate kinase from Burkholderia multivorans (strain ATCC 17616 / 249).